The sequence spans 870 residues: Ubiquitin-protein ligase E3A (870 aa).

At Ser-8 the chain carries Phosphoserine. The segment at 42–81 (CGNEACTNEFCASCPTFLRMDNNAAAIKALELYKINAKLC) adopts a C4-type; atypical zinc-finger fold. Residues 171 to 180 (EELKSLQEKD) are compositionally biased toward basic and acidic residues. The interval 171–223 (EELKSLQEKDEDKDEDEKEKAACSAAAMEEDSEASSSRMGDSSQGDNNVQKLG) is disordered. Residues 208 to 220 (RMGDSSQGDNNVQ) show a composition bias toward polar residues. The residue at position 213 (Ser-213) is a Phosphoserine. The 329-residue stretch at 542 to 870 (NPADLKKQLY…ITYAKGFGML (329 aa)) folds into the HECT domain. The residue at position 654 (Tyr-654) is a Phosphotyrosine; by ABL1. Cys-838 acts as the Glycyl thioester intermediate in catalysis.

As to quaternary structure, the active form is probably a homotrimer. Binds UBQLN1 and UBQLN2. Interacts with the 26S proteasome. Interacts with BPY2. Interacts with HIF1AN, MAPK6 and NEURL4; interaction with MAPK6 may be mediated by NEURL4. Interacts with the proteasomal subunit PSMD4. Interacts with BMAL1. Interacts with ARC. Interacts with ESR1 and WBP2. Post-translationally, phosphorylation at Tyr-654 by ABL1 impairs E3 ligase activity. Widely expressed. Most abundant in brain, heart and thymus.

It is found in the cytoplasm. The protein resides in the nucleus. It carries out the reaction S-ubiquitinyl-[E2 ubiquitin-conjugating enzyme]-L-cysteine + [acceptor protein]-L-lysine = [E2 ubiquitin-conjugating enzyme]-L-cysteine + N(6)-ubiquitinyl-[acceptor protein]-L-lysine.. It participates in protein modification; protein ubiquitination. Functionally, E3 ubiquitin-protein ligase which accepts ubiquitin from an E2 ubiquitin-conjugating enzyme in the form of a thioester and transfers it to its substrates. Several substrates have been identified including the BMAL1, ARC, LAMTOR1, RAD23A and RAD23B, MCM7 (which is involved in DNA replication), annexin A1, the PML tumor suppressor, and the cell cycle regulator CDKN1B. Additionally, may function as a cellular quality control ubiquitin ligase by helping the degradation of the cytoplasmic misfolded proteins. Finally, UBE3A also promotes its own degradation in vivo. Plays an important role in the regulation of the circadian clock: involved in the ubiquitination of the core clock component BMAL1, leading to its proteasomal degradation. Acts as a regulator of synaptic development by mediating ubiquitination and degradation of ARC. Required for synaptic remodeling in neurons by mediating ubiquitination and degradation of LAMTOR1, thereby limiting mTORC1 signaling and activity-dependent synaptic remodeling. Synergizes with WBP2 in enhancing PGR activity. The sequence is that of Ubiquitin-protein ligase E3A from Mus musculus (Mouse).